The primary structure comprises 193 residues: Adenine phosphoribosyltransferase (193 aa).

The protein belongs to the purine/pyrimidine phosphoribosyltransferase family. As to quaternary structure, homodimer.

It localises to the cytoplasm. The catalysed reaction is AMP + diphosphate = 5-phospho-alpha-D-ribose 1-diphosphate + adenine. It functions in the pathway purine metabolism; AMP biosynthesis via salvage pathway; AMP from adenine: step 1/1. Its function is as follows. Catalyzes a salvage reaction resulting in the formation of AMP, that is energically less costly than de novo synthesis. This is Adenine phosphoribosyltransferase from Bifidobacterium animalis subsp. lactis (strain AD011).